A 428-amino-acid polypeptide reads, in one-letter code: Adenylosuccinate synthetase (428 aa).

GTP-binding positions include 12 to 18 and 40 to 42; these read GDEGKGK and GHT. Asp-13 serves as the catalytic Proton acceptor. Mg(2+)-binding residues include Asp-13 and Gly-40. IMP is bound by residues 13–16, 38–41, Thr-130, Arg-144, Gln-225, Thr-240, and Arg-304; these read DEGK and NAGH. Catalysis depends on His-41, which acts as the Proton donor. 300–306 contacts substrate; sequence VTTGRAR. Residues Arg-306, 332–334, and 414–416 contribute to the GTP site; these read KID and SVG.

Belongs to the adenylosuccinate synthetase family. As to quaternary structure, homodimer. Mg(2+) serves as cofactor.

The protein resides in the cytoplasm. The enzyme catalyses IMP + L-aspartate + GTP = N(6)-(1,2-dicarboxyethyl)-AMP + GDP + phosphate + 2 H(+). Its pathway is purine metabolism; AMP biosynthesis via de novo pathway; AMP from IMP: step 1/2. Plays an important role in the de novo pathway of purine nucleotide biosynthesis. Catalyzes the first committed step in the biosynthesis of AMP from IMP. The protein is Adenylosuccinate synthetase of Clostridium botulinum (strain ATCC 19397 / Type A).